A 201-amino-acid chain; its full sequence is uncharacterized protein (201 aa).

2 disordered regions span residues 46–80 (PLVN…SYDE) and 143–201 (SSTS…ANPA). Composition is skewed to polar residues over residues 64-78 (GSQN…SQSY) and 143-167 (SSTS…NSPA).

This is an uncharacterized protein from Legionella pneumophila.